Here is a 59-residue protein sequence, read N- to C-terminus: MKVKSAAKKRFKLTKSGQIKRKHAYTSHLAPHKTTKQKRHLRKQGTVSASDFKRIGNLI.

Disordered regions lie at residues 1–22 (MKVKSAAKKRFKLTKSGQIKRK) and 30–49 (APHKTTKQKRHLRKQGTVSA). Over residues 30 to 43 (APHKTTKQKRHLRK) the composition is skewed to basic residues.

The protein belongs to the bacterial ribosomal protein bL35 family.

This is Large ribosomal subunit protein bL35 (rpmI) from Mycoplasma pneumoniae (strain ATCC 29342 / M129 / Subtype 1) (Mycoplasmoides pneumoniae).